A 317-amino-acid polypeptide reads, in one-letter code: Signal recognition particle receptor FtsY (317 aa).

GTP contacts are provided by residues 117-124 (GVNGVGKT), 199-203 (DTAGR), and 263-266 (TKLD).

The protein belongs to the GTP-binding SRP family. FtsY subfamily. In terms of assembly, part of the signal recognition particle protein translocation system, which is composed of SRP and FtsY.

Its subcellular location is the cell membrane. The protein resides in the cytoplasm. The catalysed reaction is GTP + H2O = GDP + phosphate + H(+). Involved in targeting and insertion of nascent membrane proteins into the cytoplasmic membrane. Acts as a receptor for the complex formed by the signal recognition particle (SRP) and the ribosome-nascent chain (RNC). This Deinococcus radiodurans (strain ATCC 13939 / DSM 20539 / JCM 16871 / CCUG 27074 / LMG 4051 / NBRC 15346 / NCIMB 9279 / VKM B-1422 / R1) protein is Signal recognition particle receptor FtsY.